Reading from the N-terminus, the 141-residue chain is Large ribosomal subunit protein uL11 (141 aa).

This sequence belongs to the universal ribosomal protein uL11 family. Part of the ribosomal stalk of the 50S ribosomal subunit. Interacts with L10 and the large rRNA to form the base of the stalk. L10 forms an elongated spine to which L12 dimers bind in a sequential fashion forming a multimeric L10(L12)X complex. One or more lysine residues are methylated.

Its function is as follows. Forms part of the ribosomal stalk which helps the ribosome interact with GTP-bound translation factors. This Coprothermobacter proteolyticus (strain ATCC 35245 / DSM 5265 / OCM 4 / BT) protein is Large ribosomal subunit protein uL11.